The primary structure comprises 634 residues: Extracellular metalloproteinase MEP (634 aa).

Residues 1-18 (MRGLLLAGALALPASVFA) form the signal peptide. The propeptide occupies 19 to 245 (HPAHQSYGLN…IHGVVDYVAE (227 aa)). H429 contributes to the Zn(2+) binding site. E430 is an active-site residue. Residue H433 coordinates Zn(2+).

The protein belongs to the peptidase M36 family. It depends on Zn(2+) as a cofactor.

The protein resides in the secreted. Secreted metalloproteinase that allows assimilation of proteinaceous substrates and probably acts as a virulence factor. The protein is Extracellular metalloproteinase MEP (MEP) of Neosartorya fischeri (strain ATCC 1020 / DSM 3700 / CBS 544.65 / FGSC A1164 / JCM 1740 / NRRL 181 / WB 181) (Aspergillus fischerianus).